A 304-amino-acid chain; its full sequence is Sulfate adenylyltransferase subunit 2 2 (304 aa).

This sequence belongs to the PAPS reductase family. CysD subfamily. Heterodimer composed of CysD, the smaller subunit, and CysN.

The catalysed reaction is sulfate + ATP + H(+) = adenosine 5'-phosphosulfate + diphosphate. The protein operates within sulfur metabolism; hydrogen sulfide biosynthesis; sulfite from sulfate: step 1/3. Functionally, with CysN forms the ATP sulfurylase (ATPS) that catalyzes the adenylation of sulfate producing adenosine 5'-phosphosulfate (APS) and diphosphate, the first enzymatic step in sulfur assimilation pathway. APS synthesis involves the formation of a high-energy phosphoric-sulfuric acid anhydride bond driven by GTP hydrolysis by CysN coupled to ATP hydrolysis by CysD. This Marinobacter nauticus (strain ATCC 700491 / DSM 11845 / VT8) (Marinobacter aquaeolei) protein is Sulfate adenylyltransferase subunit 2 2.